The chain runs to 416 residues: Tyrosine--tRNA ligase (416 aa).

Tyr-37 contributes to the L-tyrosine binding site. The 'HIGH' region signature appears at 42 to 51 (PTADSLHVGN). L-tyrosine contacts are provided by Tyr-176 and Gln-180. The short motif at 236–240 (KMGKS) is the 'KMSKS' region element. Lys-239 is an ATP binding site. The 67-residue stretch at 350–416 (LPAFRVFQEA…KKKHILLRPV (67 aa)) folds into the S4 RNA-binding domain.

This sequence belongs to the class-I aminoacyl-tRNA synthetase family. TyrS type 1 subfamily. As to quaternary structure, homodimer.

It localises to the cytoplasm. The enzyme catalyses tRNA(Tyr) + L-tyrosine + ATP = L-tyrosyl-tRNA(Tyr) + AMP + diphosphate + H(+). In terms of biological role, catalyzes the attachment of tyrosine to tRNA(Tyr) in a two-step reaction: tyrosine is first activated by ATP to form Tyr-AMP and then transferred to the acceptor end of tRNA(Tyr). The sequence is that of Tyrosine--tRNA ligase from Gluconobacter oxydans (strain 621H) (Gluconobacter suboxydans).